Consider the following 424-residue polypeptide: Histidine--tRNA ligase (424 aa).

This sequence belongs to the class-II aminoacyl-tRNA synthetase family. As to quaternary structure, homodimer.

Its subcellular location is the cytoplasm. It catalyses the reaction tRNA(His) + L-histidine + ATP = L-histidyl-tRNA(His) + AMP + diphosphate + H(+). The polypeptide is Histidine--tRNA ligase (Salmonella dublin (strain CT_02021853)).